We begin with the raw amino-acid sequence, 361 residues long: Peptide chain release factor 1 (361 aa).

N5-methylglutamine is present on Gln-233. Basic and acidic residues predominate over residues 280-293; that stretch reads ERRKKEQERADSRR. A disordered region spans residues 280-307; sequence ERRKKEQERADSRRGQVGSGDRSERIRT.

This sequence belongs to the prokaryotic/mitochondrial release factor family. In terms of processing, methylated by PrmC. Methylation increases the termination efficiency of RF1.

Its subcellular location is the cytoplasm. Peptide chain release factor 1 directs the termination of translation in response to the peptide chain termination codons UAG and UAA. In Rickettsia massiliae (strain Mtu5), this protein is Peptide chain release factor 1.